Consider the following 507-residue polypeptide: Light-independent protochlorophyllide reductase subunit B (507 aa).

Aspartate 36 contacts [4Fe-4S] cluster. The active-site Proton donor is the aspartate 293. 428–429 (GM) serves as a coordination point for substrate.

Belongs to the ChlB/BchB/BchZ family. Protochlorophyllide reductase is composed of three subunits; ChlL, ChlN and ChlB. Forms a heterotetramer of two ChlB and two ChlN subunits. It depends on [4Fe-4S] cluster as a cofactor.

It is found in the plastid. The protein resides in the chloroplast. The catalysed reaction is chlorophyllide a + oxidized 2[4Fe-4S]-[ferredoxin] + 2 ADP + 2 phosphate = protochlorophyllide a + reduced 2[4Fe-4S]-[ferredoxin] + 2 ATP + 2 H2O. It functions in the pathway porphyrin-containing compound metabolism; chlorophyll biosynthesis (light-independent). In terms of biological role, component of the dark-operative protochlorophyllide reductase (DPOR) that uses Mg-ATP and reduced ferredoxin to reduce ring D of protochlorophyllide (Pchlide) to form chlorophyllide a (Chlide). This reaction is light-independent. The NB-protein (ChlN-ChlB) is the catalytic component of the complex. This Porphyra purpurea (Red seaweed) protein is Light-independent protochlorophyllide reductase subunit B.